The sequence spans 228 residues: Cytidylate kinase (228 aa).

Position 12 to 20 (12 to 20 (GPSGSGKGT)) interacts with ATP.

Belongs to the cytidylate kinase family. Type 1 subfamily.

Its subcellular location is the cytoplasm. The catalysed reaction is CMP + ATP = CDP + ADP. It carries out the reaction dCMP + ATP = dCDP + ADP. This chain is Cytidylate kinase, found in Pseudomonas putida (strain W619).